The primary structure comprises 277 residues: Shikimate dehydrogenase (NADP(+)) (277 aa).

Shikimate is bound by residues 19–21 (SKS) and Thr66. Lys70 acts as the Proton acceptor in catalysis. Asp82 contributes to the NADP(+) binding site. The shikimate site is built by Asn91 and Asp107. NADP(+)-binding positions include 133–137 (GAGGA), 157–162 (NRTRAR), and Leu222. Tyr224 provides a ligand contact to shikimate. An NADP(+)-binding site is contributed by Gly245.

The protein belongs to the shikimate dehydrogenase family. In terms of assembly, homodimer.

It carries out the reaction shikimate + NADP(+) = 3-dehydroshikimate + NADPH + H(+). Its pathway is metabolic intermediate biosynthesis; chorismate biosynthesis; chorismate from D-erythrose 4-phosphate and phosphoenolpyruvate: step 4/7. Its function is as follows. Involved in the biosynthesis of the chorismate, which leads to the biosynthesis of aromatic amino acids. Catalyzes the reversible NADPH linked reduction of 3-dehydroshikimate (DHSA) to yield shikimate (SA). The protein is Shikimate dehydrogenase (NADP(+)) of Roseobacter denitrificans (strain ATCC 33942 / OCh 114) (Erythrobacter sp. (strain OCh 114)).